The following is a 372-amino-acid chain: 18-hydroxynorfluorocurarine reductase (372 aa).

9 residues coordinate Zn(2+): Cys-47, Asp-50, His-69, Glu-70, Cys-100, Cys-103, Cys-106, Cys-114, and Cys-172. Residues 197–202, Lys-226, 283–285, Ser-307, and Arg-354 each bind NADP(+); these read GLGGIG and LGA.

Belongs to the zinc-containing alcohol dehydrogenase family. As to quaternary structure, homodimer. Requires Zn(2+) as cofactor. As to expression, mainly expressed in roots.

The catalysed reaction is (19E)-cur-19-en-17-al + NADP(+) = norfluorocurarine + NADPH + H(+). It carries out the reaction 17,18-epoxy-17-hydroxycur-19-ene + NADP(+) = 18-hydroxynorfluorocurarine + NADPH + H(+). It participates in alkaloid biosynthesis. Functionally, alcohol dehydrogenase involved in the biosynthesis of curare monoterpene indole alkaloids (MIAs), natural products such as strychnine, a neurotoxic compound used as a pesticide to control rodents, and its pharmacologically active derivatives, including brucine, used to regulate blood pressure. Curare alkaloids act as animal glycine receptor antagonists. Catalyzes the conversion of norfluorocurarine to desoxy Wieland-Gumlich aldehyde, and of 18-OH norfluorocurarine to Wieland-Gumlich aldehyde. The sequence is that of 18-hydroxynorfluorocurarine reductase from Strychnos nux-vomica (Poison nut).